A 454-amino-acid polypeptide reads, in one-letter code: MNLSNLWQSCLLQLQDQVSASDLSTWLRPLQADVVADNHIVLYASNMFVKGWVETHYLAQIQQICQTLAQNPELRISLKEGVKPAPKIVESTPNTSLRSESAVDFQAESSASVKFESHLNTKHLFDNFVEGKSNQLARAVGQKLAQAPGEPSANPFFLYGGTGLGKTHLLHAIGNGILADKPNARVLYIHANNFMQHMVKAVRDNKMDQFKKFYRSLDALLVDDIQFFAEKEKTQEEFFHIFNSLFETGRQIILTSDRYPKEIEKIEERLKSRFGWGLTTAIEPPDLETRVAILLKKAEEHNMNLPEEVAFFIAQRLRTNVRELEGALNRVKAMQDFKGGDIDIDFVRDTLKDILALQERLVTIENIQKVVAEYYRIKVSDLKSKSRARSVTRPRQIAMALAKELTNRSLPEIGRAFDRDHTTVLNACREVPKFREQDNSIQEDWANLIRTLSA.

Positions 1–80 are domain I, interacts with DnaA modulators; sequence MNLSNLWQSC…NPELRISLKE (80 aa). The interval 80–117 is domain II; that stretch reads EGVKPAPKIVESTPNTSLRSESAVDFQAESSASVKFES. Residues 118 to 335 are domain III, AAA+ region; sequence HLNTKHLFDN…GALNRVKAMQ (218 aa). Residues Gly-163, Gly-165, Lys-166, and Thr-167 each contribute to the ATP site. Residues 336 to 454 form a domain IV, binds dsDNA region; it reads DFKGGDIDID…WANLIRTLSA (119 aa).

The protein belongs to the DnaA family. Oligomerizes as a right-handed, spiral filament on DNA at oriC.

It localises to the cytoplasm. Plays an essential role in the initiation and regulation of chromosomal replication. ATP-DnaA binds to the origin of replication (oriC) to initiate formation of the DNA replication initiation complex once per cell cycle. Binds the DnaA box (a 9 base pair repeat at the origin) and separates the double-stranded (ds)DNA. Forms a right-handed helical filament on oriC DNA; dsDNA binds to the exterior of the filament while single-stranded (ss)DNA is stabiized in the filament's interior. The ATP-DnaA-oriC complex binds and stabilizes one strand of the AT-rich DNA unwinding element (DUE), permitting loading of DNA polymerase. After initiation quickly degrades to an ADP-DnaA complex that is not apt for DNA replication. Binds acidic phospholipids. The protein is Chromosomal replication initiator protein DnaA of Haemophilus influenzae (strain ATCC 51907 / DSM 11121 / KW20 / Rd).